The primary structure comprises 489 residues: Equilibrative nucleobase transporter 1 (489 aa).

A helical transmembrane segment spans residues 17–37 (LLECLGFAGVLFGWTSLVFVF). A glycan (N-linked (GlcNAc...) asparagine) is linked at asparagine 56. Helical transmembrane passes span 72-92 (LIFTLASFTINFMTFPTGYIF), 102-122 (LIAIFLYTSATLTIAFTSADS), 123-143 (AVLLFLAMPMLAVGGILFLIT), and 158-180 (IITMYNGAFDSSSAVFLIIKLLY). At serine 253 the chain carries Phosphoserine. Position 258 is a phosphothreonine (threonine 258). Helical transmembrane passes span 277 to 297 (FAWHVVWLSVIQLWHYLFIGT), 318 to 338 (NAFAVTQFFGVLCAPWNGLLM), 358 to 380 (AAALRSVVPSLTLTSLLSLGFAV), 402 to 422 (SFLYGCNAAFLTLAFPSEHFG), 426 to 446 (GLVMALSAVVSLLQFPLFTLI), and 455 to 475 (LYVNLMLVLLTLLTFIHPFLV).

Belongs to the SLC43A transporter (TC 2.A.1.44) family.

The protein resides in the basolateral cell membrane. The catalysed reaction is adenine(out) = adenine(in). It carries out the reaction guanine(out) = guanine(in). The enzyme catalyses hypoxanthine(out) = hypoxanthine(in). In terms of biological role, sodium-independent purine-selective nucleobase transporter which mediates the equilibrative transport of extracellular purine nucleobases such as adenine, guanine and hypoxanthine. May regulate fatty acid (FA) transport in adipocytes, acting as a positive regulator of FA efflux and as a negative regulator of FA uptake. This chain is Equilibrative nucleobase transporter 1 (SLC43A3), found in Bos taurus (Bovine).